A 145-amino-acid chain; its full sequence is 3-dehydroquinate dehydratase (145 aa).

The active-site Proton acceptor is tyrosine 23. Residues asparagine 74, histidine 80, and aspartate 87 each contribute to the substrate site. The active-site Proton donor is histidine 100. Residues 101 to 102 (IS) and arginine 111 each bind substrate.

The protein belongs to the type-II 3-dehydroquinase family. In terms of assembly, homododecamer.

The enzyme catalyses 3-dehydroquinate = 3-dehydroshikimate + H2O. It functions in the pathway metabolic intermediate biosynthesis; chorismate biosynthesis; chorismate from D-erythrose 4-phosphate and phosphoenolpyruvate: step 3/7. Functionally, catalyzes a trans-dehydration via an enolate intermediate. The chain is 3-dehydroquinate dehydratase from Dictyoglomus turgidum (strain DSM 6724 / Z-1310).